A 720-amino-acid polypeptide reads, in one-letter code: Collectin-12 (720 aa).

Residues 1–37 lie on the Cytoplasmic side of the membrane; that stretch reads MKDDFNDEEEVQSFGYKRFGIQEGNECTKCKNDWALR. The chain crosses the membrane as a helical; Signal-anchor for type II membrane protein span at residues 38-58; that stretch reads VAIALLYVLCALLTIAVAVLG. Over 59–720 the chain is Extracellular; it reads YKVVQRMDNV…RTNESKVPVL (662 aa). 3 coiled-coil regions span residues 95-120, 216-267, and 377-408; these read EKSENATSELHSFKLEFQTLQKQLSD, ISSL…LAAN, and LHGLNNSVAETRAESTELKAQQEELAVRLDKE. Positions 433–576 are disordered; the sequence is FTILQGPPGP…GPPGLPGLPA (144 aa). 2 consecutive Collagen-like domains span residues 444-503 and 510-569; these read GPRG…PGPK and GRQG…PGPP. Basic and acidic residues predominate over residues 460–479; it reads PKGEKGEKGAPGDAGPKGEK. A compositionally biased stretch (low complexity) spans 488-503; it reads PGLKGPPGSRGSPGPK. Residues 504–513 are compositionally biased toward gly residues; sequence GSRGSGGRQG. The span at 527–560 shows a compositional bias: low complexity; sequence PGRDGQPGPTGPQGPQGLRGPAGPAGLEGARGPV. The span at 562-576 shows a compositional bias: pro residues; that stretch reads PIGPPGPPGLPGLPA. 3 disulfide bridges follow: Cys604/Cys615, Cys634/Cys709, and Cys687/Cys701. The C-type lectin domain maps to 611-710; that stretch reads FREQCYHFSA…CTERIGFICE (100 aa). Ca(2+) contacts are provided by Ile643, Asn645, and Glu649. The a carbohydrate site is built by Lys670, Gln673, and Asp675. Ca(2+)-binding residues include Gln673, Asp675, Asn676, Glu685, Asp686, Asn697, Asp698, and Glu710. Position 685 (Glu685) interacts with a carbohydrate. A carbohydrate-binding residues include Asn697 and Asp698.

The protein resides in the membrane. Functionally, scavenger receptor that displays several functions associated with host defense. Binds to carbohydrates. This is Collectin-12 (colec12) from Danio rerio (Zebrafish).